We begin with the raw amino-acid sequence, 306 residues long: Ornithine carbamoyltransferase, anabolic (306 aa).

Carbamoyl phosphate is bound by residues 46 to 49 (STRT), Gln73, Arg97, and 124 to 127 (HPTQ). Residues Asn156, Asp220, and 224–225 (SM) contribute to the L-ornithine site. Carbamoyl phosphate is bound by residues 260-261 (CL) and Arg288.

Belongs to the aspartate/ornithine carbamoyltransferase superfamily. OTCase family. As to quaternary structure, homohexamer; dimer of trimers.

It is found in the cytoplasm. The enzyme catalyses carbamoyl phosphate + L-ornithine = L-citrulline + phosphate + H(+). The protein operates within amino-acid biosynthesis; L-arginine biosynthesis; L-arginine from L-ornithine and carbamoyl phosphate: step 1/3. Reversibly catalyzes the transfer of the carbamoyl group from carbamoyl phosphate (CP) to the N(epsilon) atom of ornithine (ORN) to produce L-citrulline, which is a substrate for argininosuccinate synthetase (ArgG) involved in the final step in arginine biosynthesis. The protein is Ornithine carbamoyltransferase, anabolic of Campylobacter jejuni subsp. jejuni serotype O:2 (strain ATCC 700819 / NCTC 11168).